A 100-amino-acid chain; its full sequence is Pancreatic trypsin inhibitor (100 aa).

The signal sequence occupies residues 1 to 21; it reads MKMSRLCLSVALLVLLGTLAA. The propeptide occupies 22–35; that stretch reads STPGCDTSNQAKAQ. The region spanning 40-90 is the BPTI/Kunitz inhibitor domain; that stretch reads CLEPPYTGPCKARIIRYFYNAKAGLCQTFVYGGCRAKRNNFKSAEDCMRTC. Cystine bridges form between C40/C90, C49/C73, and C65/C86. Residues 94 to 100 constitute a propeptide that is removed on maturation; the sequence is IGPWENL.

Its subcellular location is the secreted. Its function is as follows. Inhibits trypsin, kallikrein, chymotrypsin, and plasmin. This chain is Pancreatic trypsin inhibitor, found in Bos taurus (Bovine).